A 95-amino-acid polypeptide reads, in one-letter code: Aspartyl/glutamyl-tRNA(Asn/Gln) amidotransferase subunit C (95 aa).

It belongs to the GatC family. As to quaternary structure, heterotrimer of A, B and C subunits.

It catalyses the reaction L-glutamyl-tRNA(Gln) + L-glutamine + ATP + H2O = L-glutaminyl-tRNA(Gln) + L-glutamate + ADP + phosphate + H(+). It carries out the reaction L-aspartyl-tRNA(Asn) + L-glutamine + ATP + H2O = L-asparaginyl-tRNA(Asn) + L-glutamate + ADP + phosphate + 2 H(+). Allows the formation of correctly charged Asn-tRNA(Asn) or Gln-tRNA(Gln) through the transamidation of misacylated Asp-tRNA(Asn) or Glu-tRNA(Gln) in organisms which lack either or both of asparaginyl-tRNA or glutaminyl-tRNA synthetases. The reaction takes place in the presence of glutamine and ATP through an activated phospho-Asp-tRNA(Asn) or phospho-Glu-tRNA(Gln). This is Aspartyl/glutamyl-tRNA(Asn/Gln) amidotransferase subunit C from Nitrosomonas europaea (strain ATCC 19718 / CIP 103999 / KCTC 2705 / NBRC 14298).